Reading from the N-terminus, the 215-residue chain is UPF0502 protein YceH (215 aa).

Residue lysine 80 is modified to N6-acetyllysine.

Belongs to the UPF0502 family.

In Escherichia coli O45:K1 (strain S88 / ExPEC), this protein is UPF0502 protein YceH.